The sequence spans 430 residues: Adenylosuccinate synthetase (430 aa).

GTP contacts are provided by residues 12 to 18 (GDEGKGK) and 40 to 42 (GHT). Asp-13 functions as the Proton acceptor in the catalytic mechanism. Mg(2+)-binding residues include Asp-13 and Gly-40. Residues 13 to 16 (DEGK), 38 to 41 (NAGH), Thr-129, Arg-143, Gln-224, Thr-239, and Arg-303 contribute to the IMP site. Catalysis depends on His-41, which acts as the Proton donor. Position 299-305 (299-305 (TVSNRER)) interacts with substrate. Residues Arg-305, 331–333 (KLD), and 413–415 (STG) each bind GTP.

It belongs to the adenylosuccinate synthetase family. In terms of assembly, homodimer. It depends on Mg(2+) as a cofactor.

It is found in the cytoplasm. The enzyme catalyses IMP + L-aspartate + GTP = N(6)-(1,2-dicarboxyethyl)-AMP + GDP + phosphate + 2 H(+). The protein operates within purine metabolism; AMP biosynthesis via de novo pathway; AMP from IMP: step 1/2. Plays an important role in the de novo pathway of purine nucleotide biosynthesis. Catalyzes the first committed step in the biosynthesis of AMP from IMP. This is Adenylosuccinate synthetase from Ehrlichia ruminantium (strain Gardel).